The following is a 133-amino-acid chain: Agglutinin alpha chain (133 aa).

The Jacalin-type lectin domain occupies 1–133 (GVTFDDGAYT…LDYFSIYLSL (133 aa)).

This sequence belongs to the jacalin lectin family. As to quaternary structure, formed of four alpha chains and four beta chains.

Its function is as follows. D-galactose-specific lectin, binds the T-antigen structure Gal-beta1,3-GalNAc. The chain is Agglutinin alpha chain from Maclura pomifera (Osage orange).